We begin with the raw amino-acid sequence, 248 residues long: Probable transcriptional regulatory protein Avi_3631 (248 aa).

This sequence belongs to the TACO1 family.

It is found in the cytoplasm. The protein is Probable transcriptional regulatory protein Avi_3631 of Allorhizobium ampelinum (strain ATCC BAA-846 / DSM 112012 / S4) (Agrobacterium vitis (strain S4)).